A 518-amino-acid chain; its full sequence is Golgi-associated olfactory signaling regulator (518 aa).

Residues 1–19 form the signal peptide; that stretch reads MKSFSRILFLVFLLAGLRS. The Extracellular segment spans residues 20-409; the sequence is KAAPSAPLPL…GRPRGAAGGA (390 aa). Residues 38-377 form a disordered region; sequence HPSETSPLKG…ATLRAPQRHS (340 aa). Residues 92–106 show a composition bias toward basic and acidic residues; it reads DLRETPHPESPETPK. A glycan (N-linked (GlcNAc...) asparagine) is linked at Asn124. Residues 138–153 are compositionally biased toward pro residues; sequence TPGPTEMPHPGSPETP. Residue Asn156 is glycosylated (N-linked (GlcNAc...) asparagine). Composition is skewed to polar residues over residues 168–180 and 187–207; these read TPNT…TPQE and LNAT…NPTK. N-linked (GlcNAc...) asparagine glycosylation is found at Asn188 and Asn220. 2 stretches are compositionally biased toward basic and acidic residues: residues 209–220 and 236–247; these read PDPKSPEKHDLN and DPSKTPHPESHV. Polar residues-rich tracts occupy residues 248-270 and 276-285; these read THNP…QNAT and SDPQISTSLY. Asn268 carries N-linked (GlcNAc...) asparagine glycosylation. A helical transmembrane segment spans residues 410-430; it reads LCLFFAGTALLIGIFVLLWCL. Over 431–518 the chain is Cytoplasmic; that stretch reads YRRAARQRPF…SPATLPNNFV (88 aa). Positions 477-518 are disordered; the sequence is HIATKQPPPTPPLPPKLPPPPRGGRPQRLEALSPATLPNNFV. Residues 482-499 show a composition bias toward pro residues; the sequence is QPPPTPPLPPKLPPPPRG.

It is found in the golgi apparatus membrane. Its function is as follows. Required for proper function of the olfactory system. May be involved in establishing the acuity of olfactory sensory signaling. The protein is Golgi-associated olfactory signaling regulator (GFY) of Homo sapiens (Human).